The sequence spans 196 residues: Leucyl/phenylalanyl-tRNA--protein transferase (196 aa).

This sequence belongs to the L/F-transferase family.

The protein localises to the cytoplasm. It catalyses the reaction N-terminal L-lysyl-[protein] + L-leucyl-tRNA(Leu) = N-terminal L-leucyl-L-lysyl-[protein] + tRNA(Leu) + H(+). The catalysed reaction is N-terminal L-arginyl-[protein] + L-leucyl-tRNA(Leu) = N-terminal L-leucyl-L-arginyl-[protein] + tRNA(Leu) + H(+). The enzyme catalyses L-phenylalanyl-tRNA(Phe) + an N-terminal L-alpha-aminoacyl-[protein] = an N-terminal L-phenylalanyl-L-alpha-aminoacyl-[protein] + tRNA(Phe). Functions in the N-end rule pathway of protein degradation where it conjugates Leu, Phe and, less efficiently, Met from aminoacyl-tRNAs to the N-termini of proteins containing an N-terminal arginine or lysine. The sequence is that of Leucyl/phenylalanyl-tRNA--protein transferase from Thermosynechococcus vestitus (strain NIES-2133 / IAM M-273 / BP-1).